A 141-amino-acid chain; its full sequence is Small ribosomal subunit protein bS18c (141 aa).

Disordered regions lie at residues 14–55 (EFIA…IKPG) and 120–141 (IKRRESTARKKRKKGFRKRPKK). Residues 24–34 (PKAPLQPPLPP) show a composition bias toward pro residues. Residues 35-51 (SKRKGKPPKSPRRRSSR) are compositionally biased toward basic residues.

The protein belongs to the bacterial ribosomal protein bS18 family. Part of the 30S ribosomal subunit.

Its subcellular location is the plastid. It is found in the chloroplast. This chain is Small ribosomal subunit protein bS18c, found in Pelargonium hortorum (Common geranium).